The primary structure comprises 453 residues: Tryptophan biosynthesis protein TrpCF (453 aa).

The tract at residues 1–257 is indole-3-glycerol phosphate synthase; sequence MMQTVLAKIV…AAVRRVLLGE (257 aa). The segment at 258–453 is N-(5'-phosphoribosyl)anthranilate isomerase; sequence NKVCGLTRGQ…ASVFQTLRAY (196 aa).

It in the N-terminal section; belongs to the TrpC family. The protein in the C-terminal section; belongs to the TrpF family. As to quaternary structure, monomer.

It catalyses the reaction N-(5-phospho-beta-D-ribosyl)anthranilate = 1-(2-carboxyphenylamino)-1-deoxy-D-ribulose 5-phosphate. The enzyme catalyses 1-(2-carboxyphenylamino)-1-deoxy-D-ribulose 5-phosphate + H(+) = (1S,2R)-1-C-(indol-3-yl)glycerol 3-phosphate + CO2 + H2O. It participates in amino-acid biosynthesis; L-tryptophan biosynthesis; L-tryptophan from chorismate: step 3/5. It functions in the pathway amino-acid biosynthesis; L-tryptophan biosynthesis; L-tryptophan from chorismate: step 4/5. Bifunctional enzyme that catalyzes two sequential steps of tryptophan biosynthetic pathway. The first reaction is catalyzed by the isomerase, coded by the TrpF domain; the second reaction is catalyzed by the synthase, coded by the TrpC domain. The chain is Tryptophan biosynthesis protein TrpCF (trpC) from Escherichia coli O157:H7.